We begin with the raw amino-acid sequence, 556 residues long: Adenine deaminase (556 aa).

Belongs to the metallo-dependent hydrolases superfamily. Adenine deaminase family. Requires Mn(2+) as cofactor.

The catalysed reaction is adenine + H2O + H(+) = hypoxanthine + NH4(+). The chain is Adenine deaminase from Methanocaldococcus jannaschii (strain ATCC 43067 / DSM 2661 / JAL-1 / JCM 10045 / NBRC 100440) (Methanococcus jannaschii).